An 899-amino-acid chain; its full sequence is Gamma-aminobutyric acid type B receptor subunit 1 (899 aa).

Residues 1-19 (MFVRSSWLLLWGTIVWASA) form the signal peptide. Residues 20–447 (EPVTLHIGGT…KKHAMTVSNE (428 aa)) lie on the Extracellular side of the membrane. Residues asparagine 69, asparagine 266, asparagine 339, asparagine 353, and asparagine 371 are each glycosylated (N-linked (GlcNAc...) asparagine). Residues 448–468 (FYYPTILFAVLGIAACVFIYL) traverse the membrane as a helical segment. The Cytoplasmic segment spans residues 469 to 487 (FTQKHHERLIIFQSQPECN). Residues 488 to 508 (NILLIGCSLCLFSLFLIGLPS) form a helical membrane-spanning segment. Residues 509–525 (DDISISESLFPLLCHAR) lie on the Extracellular side of the membrane. Residues 526–546 (VTILLFGFTFAYGSMFAKVWI) traverse the membrane as a helical segment. Over 547–616 (VHRMGATENQ…LNQPISSSKF (70 aa)) the chain is Cytoplasmic. Residues 617 to 637 (YVIVAALTAVDVFVCFVWVLI) traverse the membrane as a helical segment. Topologically, residues 638–674 (DPLHLTEQKFPLFTPADSEEDEMIMPVLQQCQSNQQE) are extracellular. Residues 675–695 (VWIGIIMGFKCLLLVFGTFLS) traverse the membrane as a helical segment. The Cytoplasmic portion of the chain corresponds to 696-713 (YETRNLKLRFINDSRFVG). Residues 714–734 (LAIYNVAVMTLVTAPVVTLLI) traverse the membrane as a helical segment. The Extracellular segment spans residues 735 to 741 (HGKVDAN). A helical membrane pass occupies residues 742–762 (FAFISLTVLICTYISVGLIYG). Residues 763–899 (PKIRHIIKVP…SSTSSDEILL (137 aa)) are Cytoplasmic-facing. Positions 791-842 (KVDQKRYDMLKKENETLQIQIEEKERKIHECKERLEELTKNSETEDMNAQLL) form a coiled coil. The segment at 870 to 899 (DLQNGNHPGQIYENDNDDDGSSTSSDEILL) is disordered. Residues 890–899 (SSTSSDEILL) show a composition bias toward low complexity.

This sequence belongs to the G-protein coupled receptor 3 family. May form a heterodimer with gbb-2. As to expression, expressed in the nervous system, including cholinergic motor neurons, but not in GABAergic motor neurons or muscle.

It is found in the cell membrane. Functionally, component of a heterodimeric G-protein coupled receptor for GABA, formed by gbb-1 and gbb-2. Within the heterodimeric GABA receptor, only gbb-1 seems to bind agonists, while gbb-2 mediates coupling to G proteins. Ligand binding causes a conformation change that triggers signaling via guanine nucleotide-binding proteins (G proteins) and modulates the activity of down-stream effectors, such as adenylate cyclase. Signaling inhibits adenylate cyclase, stimulates phospholipase A2, activates potassium channels, inactivates voltage-dependent calcium-channels and modulates inositol phospholipid hydrolysis. Calcium is required for high affinity binding to GABA. Plays a critical role in the fine-tuning of inhibitory synaptic transmission. Pre-synaptic GABA receptor inhibits neurotransmitter release by down-regulating high-voltage activated calcium channels, whereas postsynaptic GABA receptor decreases neuronal excitability by activating a prominent inwardly rectifying potassium (Kir) conductance that underlies the late inhibitory postsynaptic potentials. Along with gbb-2, may couple to the G(o)-alpha G-protein goa-1 to negatively regulate cholinergic receptor activity in the presence of high levels of acetylcholine in ventral cord motor neurons. As acetylcholine depolarizes body wall muscles, modulation of acetylcholine levels most likely results in the control of locomotory behavior. Acts in neurons to regulate lifespan, and this may be through G-protein-egl-8/PLC-beta signaling to the transcription factor daf-16/FOXO. The sequence is that of Gamma-aminobutyric acid type B receptor subunit 1 from Caenorhabditis elegans.